We begin with the raw amino-acid sequence, 102 residues long: Large ribosomal subunit protein eL31 (102 aa).

Belongs to the eukaryotic ribosomal protein eL31 family.

This Staphylothermus marinus (strain ATCC 43588 / DSM 3639 / JCM 9404 / F1) protein is Large ribosomal subunit protein eL31.